A 226-amino-acid polypeptide reads, in one-letter code: Leucyl/phenylalanyl-tRNA--protein transferase (226 aa).

The protein belongs to the L/F-transferase family.

The protein localises to the cytoplasm. It carries out the reaction N-terminal L-lysyl-[protein] + L-leucyl-tRNA(Leu) = N-terminal L-leucyl-L-lysyl-[protein] + tRNA(Leu) + H(+). The catalysed reaction is N-terminal L-arginyl-[protein] + L-leucyl-tRNA(Leu) = N-terminal L-leucyl-L-arginyl-[protein] + tRNA(Leu) + H(+). The enzyme catalyses L-phenylalanyl-tRNA(Phe) + an N-terminal L-alpha-aminoacyl-[protein] = an N-terminal L-phenylalanyl-L-alpha-aminoacyl-[protein] + tRNA(Phe). Functionally, functions in the N-end rule pathway of protein degradation where it conjugates Leu, Phe and, less efficiently, Met from aminoacyl-tRNAs to the N-termini of proteins containing an N-terminal arginine or lysine. The protein is Leucyl/phenylalanyl-tRNA--protein transferase of Pseudomonas fluorescens (strain SBW25).